The primary structure comprises 1175 residues: Atrophin-1 (1175 aa).

Disordered stretches follow at residues Met1–Ser595, Ser608–Asn752, and Val770–Pro847. A Nuclear localization signal motif is present at residues Arg16 to Arg32. Residues Lys17–Ser29 are compositionally biased toward basic and acidic residues. At Ser34 the chain carries Phosphoserine. Positions Gly45 to Ser63 are enriched in basic and acidic residues. A phosphoserine mark is found at Ser77, Ser79, Ser101, Ser103, and Ser107. Residues Leu108–Asn128 are compositionally biased toward basic and acidic residues. The span at Arg129 to Ser152 shows a compositional bias: polar residues. Composition is skewed to pro residues over residues Pro158–Ser174 and Gly208–His217. Low complexity-rich tracts occupy residues Gly240–Lys253 and Ile262–Pro273. Positions Pro345–Arg374 are enriched in pro residues. The span at Ser378–Ser396 shows a compositional bias: low complexity. Polar residues predominate over residues Ser416–Trp437. Residues Thr476–Gly491 are compositionally biased toward basic residues. Positions His503–Pro553 are involved in binding BAIAP2. Pro residues predominate over residues Pro527 to His539. A compositionally biased stretch (low complexity) spans Ala547–Tyr584. The residue at position 617 (Ser617) is a Phosphoserine. Lys626 carries the post-translational modification N6-acetyllysine. At Thr638 the chain carries Phosphothreonine. Ser646 is subject to Phosphoserine. Thr654 is subject to Phosphothreonine. Composition is skewed to pro residues over residues Leu693–Gly703 and Pro722–Lys737. Ser724 carries the post-translational modification Phosphoserine; by MAPK8. Phosphoserine is present on residues Ser731 and Ser733. The span at Lys780–Val824 shows a compositional bias: basic and acidic residues. A required for interaction with FAT1 region spans residues Asp864–Val879. Position 881 is a phosphoserine (Ser881). The disordered stretch occupies residues Pro913–Lys932. Positions Ala914–Lys932 are enriched in basic and acidic residues. The short motif at Ala1018–Arg1026 is the Nuclear export signal element. Residue Arg1100 is modified to Asymmetric dimethylarginine. Lys1168 participates in a covalent cross-link: Glycyl lysine isopeptide (Lys-Gly) (interchain with G-Cter in SUMO2).

Interacts with BAIAP2, WWP1, WWP2, WWP3 and RERE. Interacts (via its N-terminus) with MTG8; the interaction enhances transcriptional repression of MTG8. Interacts with PQBP1. Interacts with NR2E1; the interaction represses the transcriptional activity of NR2E1. Interacts with FAT1 (via a C-terminal domain). Post-translationally, phosphorylated in vitro by MAPK8/JNK1 on Ser-724. In terms of tissue distribution, widely expressed. Most abundant in the brain.

Its subcellular location is the cytoplasm. The protein resides in the perinuclear region. It is found in the cell junction. It localises to the nucleus. Functionally, transcriptional corepressor. Corepressor of MTG8 transcriptional repression. Has some intrinsic repression activity which is independent of the number of the poly-Q repeats. Recruits NR2E1 to repress transcription. Promotes vascular smooth cell (VSMC) migration and orientation. The protein is Atrophin-1 (Atn1) of Mus musculus (Mouse).